A 206-amino-acid chain; its full sequence is Ribosome maturation factor RimP (206 aa).

The interval 164-206 (GGIPEGRAVPSDAVDLTDDSGVDSVEDDEAELEDVENEEGFDK) is disordered. The span at 178 to 206 (DLTDDSGVDSVEDDEAELEDVENEEGFDK) shows a compositional bias: acidic residues.

Belongs to the RimP family.

It is found in the cytoplasm. Required for maturation of 30S ribosomal subunits. The sequence is that of Ribosome maturation factor RimP from Rhodococcus erythropolis (strain PR4 / NBRC 100887).